An 832-amino-acid polypeptide reads, in one-letter code: Protein monoglycylase TTLL8 (832 aa).

A compositionally biased stretch (pro residues) spans 1–13 (MSCPPTPNPPFRP). 2 disordered regions span residues 1 to 84 (MSCP…QDLS) and 277 to 304 (GKSK…KLPS). Composition is skewed to basic and acidic residues over residues 46 to 59 (QLRE…ERKK), 66 to 75 (DGDHKEENKL), and 280 to 299 (KKEE…ENPD). The TTL domain occupies 271 to 624 (YCSKVKGKSK…RKLDRNCDIG (354 aa)). ATP-binding positions include Lys397, 403 to 404 (RG), 435 to 438 (QKYI), 448 to 450 (KFD), and 492 to 493 (CN). An a protein-binding site is contributed by Arg403. Ser495 is an L-glutamate binding site. Residues Asp570, Glu583, and Asn585 each contribute to the Mg(2+) site. Residue Glu583 participates in ATP binding.

Mg(2+) is required as a cofactor. As to expression, highly expressed in testis. Expressed in brain, heart, kidney, liver, lung, muscle, spleen and trachea. Expressed in sperm flagellum. In the brain, specifically expressed in ependymal cilia.

It is found in the cytoplasm. The protein resides in the cytoskeleton. The protein localises to the cell projection. It localises to the cilium. Its subcellular location is the cilium axoneme. It is found in the flagellum axoneme. It carries out the reaction L-glutamyl-[protein] + glycine + ATP = glycyl-L-glutamyl-[protein] + ADP + phosphate + H(+). Its function is as follows. Monoglycylase which modifies both tubulin and non-tubulin proteins, adding a single glycine on the gamma-carboxyl groups of specific glutamate residues to generate monoglycine side chains within the C-terminal tail of target proteins. Not involved in elongation step of the polyglycylation reaction. Preferentially monoglycylates alpha-tubulin over beta-tubulin. Together with TTLL3, mediates microtubule glycylation of primary and motile cilia, which is essential for their stability and maintenance. Together with TTLL3, glycylates sperm flagella which regulates axonemal dynein motor activity, thereby controlling flagellar beat, directional sperm swimming and male fertility. Monoglycylates non-tubulin proteins such as ANP32A, ANP32B, SET, NCL and NAP1. In Mus musculus (Mouse), this protein is Protein monoglycylase TTLL8.